We begin with the raw amino-acid sequence, 220 residues long: Glutathione S-transferase 2 (220 aa).

Positions 2 to 88 (VVTLGYWDIR…YIARKHNMCG (87 aa)) constitute a GST N-terminal domain. Glutathione is bound by residues 7–8 (YW), 43–46 (PSDW), Lys50, 59–60 (NL), and 72–73 (QS). A GST C-terminal domain is found at 90–208 (TEVEKQRVDV…RSGRFMKAPI (119 aa)). Tyr116 is a binding site for substrate.

The protein belongs to the GST superfamily. Mu family. Homodimer.

The protein localises to the cytoplasm. It carries out the reaction RX + glutathione = an S-substituted glutathione + a halide anion + H(+). Its function is as follows. Conjugation of reduced glutathione to a wide number of exogenous and endogenous hydrophobic electrophiles. Participates in the formation of novel hepoxilin regioisomers. This chain is Glutathione S-transferase 2 (GSTM2), found in Gallus gallus (Chicken).